Reading from the N-terminus, the 239-residue chain is 1-(5-phosphoribosyl)-5-[(5-phosphoribosylamino)methylideneamino] imidazole-4-carboxamide isomerase (239 aa).

The active-site Proton acceptor is the Asp-8. Residue Asp-129 is the Proton donor of the active site.

This sequence belongs to the HisA/HisF family.

The protein localises to the cytoplasm. It carries out the reaction 1-(5-phospho-beta-D-ribosyl)-5-[(5-phospho-beta-D-ribosylamino)methylideneamino]imidazole-4-carboxamide = 5-[(5-phospho-1-deoxy-D-ribulos-1-ylimino)methylamino]-1-(5-phospho-beta-D-ribosyl)imidazole-4-carboxamide. The protein operates within amino-acid biosynthesis; L-histidine biosynthesis; L-histidine from 5-phospho-alpha-D-ribose 1-diphosphate: step 4/9. In Legionella pneumophila subsp. pneumophila (strain Philadelphia 1 / ATCC 33152 / DSM 7513), this protein is 1-(5-phosphoribosyl)-5-[(5-phosphoribosylamino)methylideneamino] imidazole-4-carboxamide isomerase.